Here is an 82-residue protein sequence, read N- to C-terminus: MPPCSSKSILSTKSSMFILVSFALLRFIFYFVEFYRLVIGMNNLEIKRMNQKIVRNSERWEDPFDRIISFHYIDNFKKLFIL.

The protein localises to the plastid. It is found in the chloroplast. This is an uncharacterized protein from Vicia faba (Broad bean).